The chain runs to 212 residues: NAD(P)H-hydrate epimerase (212 aa).

In terms of domain architecture, YjeF N-terminal spans 11–212 (MRHYDSYTIN…ANDMGTYAVD (202 aa)). A (6S)-NADPHX-binding site is contributed by 60–64 (NNGGD). N61 and D123 together coordinate K(+). (6S)-NADPHX-binding positions include 127-133 (GIGIDRA), Y138, and D156. S159 serves as a coordination point for K(+).

It belongs to the NnrE/AIBP family. It depends on K(+) as a cofactor.

The catalysed reaction is (6R)-NADHX = (6S)-NADHX. The enzyme catalyses (6R)-NADPHX = (6S)-NADPHX. Its function is as follows. Catalyzes the epimerization of the S- and R-forms of NAD(P)HX, a damaged form of NAD(P)H that is a result of enzymatic or heat-dependent hydration. This is a prerequisite for the S-specific NAD(P)H-hydrate dehydratase to allow the repair of both epimers of NAD(P)HX. The polypeptide is NAD(P)H-hydrate epimerase (Limosilactobacillus reuteri (strain ATCC 55730 / SD2112) (Lactobacillus reuteri)).